We begin with the raw amino-acid sequence, 412 residues long: Tyrosine--tRNA ligase (412 aa).

L-tyrosine is bound at residue tyrosine 41. The 'HIGH' region motif lies at 46–55 (ATADSLHVGH). L-tyrosine-binding residues include tyrosine 174 and glutamine 178. A 'KMSKS' region motif is present at residues 234–238 (KMGKS). Lysine 237 contributes to the ATP binding site. Residues 348 to 411 (LSLTDLLLEH…KKQHLHLRLE (64 aa)) form the S4 RNA-binding domain.

This sequence belongs to the class-I aminoacyl-tRNA synthetase family. TyrS type 1 subfamily. As to quaternary structure, homodimer.

The protein resides in the cytoplasm. The catalysed reaction is tRNA(Tyr) + L-tyrosine + ATP = L-tyrosyl-tRNA(Tyr) + AMP + diphosphate + H(+). Catalyzes the attachment of tyrosine to tRNA(Tyr) in a two-step reaction: tyrosine is first activated by ATP to form Tyr-AMP and then transferred to the acceptor end of tRNA(Tyr). The polypeptide is Tyrosine--tRNA ligase (Pseudomonas aeruginosa (strain LESB58)).